A 204-amino-acid chain; its full sequence is Cardiotrophin-2 (204 aa).

The N-terminal stretch at 1-22 (MYCLLATPLCLLSLLLPPLSPA) is a signal peptide. Residue N44 is glycosylated (N-linked (GlcNAc...) asparagine).

The protein belongs to the IL-6 superfamily. Binds to tripartite CNTF receptor complex consisting of CNTF alpha chain, LIFR and IL6ST (in vitro). Not detected in adult tissues.

Its subcellular location is the secreted. Functionally, increases the platelet count associated with splenomegaly. May have an important role in neuronal precursor development and maturation. The protein is Cardiotrophin-2 (Ctf2) of Mus musculus (Mouse).